A 273-amino-acid polypeptide reads, in one-letter code: tRNA pseudouridine synthase B (273 aa).

The active-site Nucleophile is D38.

Belongs to the pseudouridine synthase TruB family. Type 1 subfamily.

The enzyme catalyses uridine(55) in tRNA = pseudouridine(55) in tRNA. Functionally, responsible for synthesis of pseudouridine from uracil-55 in the psi GC loop of transfer RNAs. The chain is tRNA pseudouridine synthase B from Campylobacter concisus (strain 13826).